Consider the following 87-residue polypeptide: HssA/B-like protein 18 (87 aa).

The protein belongs to the hssA/B family.

The protein is HssA/B-like protein 18 (hssl18) of Dictyostelium discoideum (Social amoeba).